Consider the following 893-residue polypeptide: Flippase kinase 1 (893 aa).

Residues 1–23 (MAGHHHEHEQERDHEQEHEHDSL) show a composition bias toward basic and acidic residues. Disordered stretches follow at residues 1–124 (MAGH…SSKL), 129–148 (PMTSVANASPASPPLSPTIP), and 163–243 (QHEH…ERAG). Polar residues predominate over residues 24 to 42 (QRPTTGSERTRSISFSKLL). A compositionally biased stretch (low complexity) spans 49–62 (NASSSNNMSVSSVN). The span at 76 to 87 (NNSGSEGQSSRF) shows a compositional bias: polar residues. Positions 96–122 (SGNSSKNASAHNSSQSSLEGDSASSSS) are enriched in low complexity. Phosphoserine occurs at positions 140, 144, 171, 175, and 185. Positions 206-216 (SQNSNNSSSTS) are enriched in low complexity. The segment covering 228–237 (GSQGFSSNNP) has biased composition (polar residues). Ser-300 carries the post-translational modification Phosphoserine. Residues 334-355 (DTLNGSPSRGSSKSPTITQTFP) are compositionally biased toward polar residues. The segment at 334 to 480 (DTLNGSPSRG…PRRSRRLRTK (147 aa)) is disordered. Positions 370–380 (NNDKHDEKEEQ) are enriched in basic and acidic residues. Positions 381–399 (QTTTDNKTRNLSPTKQNGK) are enriched in polar residues. Position 414 is a phosphoserine (Ser-414). Residues 422–439 (ASATSPTSSSARKTSGSS) show a composition bias toward low complexity. The residue at position 462 (Ser-462) is a Phosphoserine. A Protein kinase domain is found at 496–777 (FEKIRLLGQG…AADVKKHPFF (282 aa)). ATP is bound by residues 502-510 (LGQGDVGKV) and Lys-525. The active-site Proton acceptor is the Asp-621. Residues 778–861 (KKVQWSLLRN…MSLMEQDNNS (84 aa)) form the AGC-kinase C-terminal domain. The tract at residues 874–893 (AYTPNSNRSRSNSHRTFFKR) is disordered. The span at 884–893 (SNSHRTFFKR) shows a compositional bias: basic residues.

Belongs to the protein kinase superfamily. Ser/Thr protein kinase family. KIN82 subfamily. Post-translationally, the N-terminal non-catalytic domain is phosphorylated by YPK1.

Its subcellular location is the cytoplasm. It is found in the cell membrane. The enzyme catalyses L-seryl-[protein] + ATP = O-phospho-L-seryl-[protein] + ADP + H(+). The catalysed reaction is L-threonyl-[protein] + ATP = O-phospho-L-threonyl-[protein] + ADP + H(+). Down-regulated by YKP1 phosphorylation. This effect is counteracted in the presence of mannosyl-inositolphosphorylceramide (MIPC). Flippase activator that phosphorylates DNF1 and DNF2 and which is involved in the generation of phospholipid asymmetry in membranes by the inward translocation of phospholipids and in the retrieval pathway from early endosomes to the trans-Golgi network (TGN). Also phosphorylates the N-terminal half of YPK1. Involved in pheromone-response. The sequence is that of Flippase kinase 1 (FPK1) from Saccharomyces cerevisiae (strain ATCC 204508 / S288c) (Baker's yeast).